The chain runs to 155 residues: Small ribosomal subunit protein uS13 (155 aa).

Basic residues predominate over residues 135 to 145; the sequence is QHTKTTGRRGR. Residues 135–155 are disordered; the sequence is QHTKTTGRRGRTVGVSRTKGA. Residues 146-155 are compositionally biased toward low complexity; it reads TVGVSRTKGA.

Belongs to the universal ribosomal protein uS13 family. As to quaternary structure, component of the small ribosomal subunit.

The protein resides in the cytoplasm. Its function is as follows. Component of the small ribosomal subunit. The ribosome is a large ribonucleoprotein complex responsible for the synthesis of proteins in the cell. This chain is Small ribosomal subunit protein uS13 (RPS18), found in Entamoeba histolytica (strain ATCC 30459 / HM-1:IMSS / ABRM).